The chain runs to 397 residues: MEGLIEELRSRVRELEEELDRVRNGQHEGHRTKIEKMSAEVVDSNPYSRLMALKRMGIVENYEKIRTFTVAVVGVGGVGSVTAEMLTRCGIGKLLLFDYDKVELANMNRLFFQPHQAGLSKVEAAEHTLRNINPDVQFEVHNYNITTLDNFQHFMDRISKGGLKEGSPVDLVLSCVDNFEARMAINTACNELGQVWMESGVSENAVSGHIQLIKPGETACFACAPPLVVAANIDEKTLKREGVCAASLPTTMGVVAGILVQNVLKYLLNFGTVSFYLGYNAMQDFFPTMAMKPNPQCDDKYCRKQQEEFKLKEAAKPKQETVVVEEEEVVHEDNDWGIELVSEVSEEELKAASGPVPDLPEGIKVAYTIPITKPTSGFTVEDSEQSLDELMAQMKNL.

Positions 77, 98, 121, 144, and 178 each coordinate ATP. Zn(2+)-binding residues include C220 and C223. C244 acts as the Glycyl thioester intermediate in catalysis. Residues C297 and C302 each coordinate Zn(2+). The short motif at 329-341 is the UFM1-interacting sequence (UIS) element; that stretch reads VVHEDNDWGIELV. The linker stretch occupies residues 342–372; the sequence is SEVSEEELKAASGPVPDLPEGIKVAYTIPIT. The UFC1-binding sequence (UFC) signature appears at 382–397; sequence DSEQSLDELMAQMKNL.

It belongs to the ubiquitin-activating E1 family. UBA5 subfamily. As to quaternary structure, homodimer; homodimerization is required for ufm1 activation. Interacts (via UIS motif) with ufm1; binds ufm1 via a trans-binding mechanism in which ufm1 interacts with distinct sites in both subunits of the uba5 homodimer. Interacts (via C-terminus) with ufc1.

The protein localises to the cytoplasm. It localises to the nucleus. The protein resides in the endoplasmic reticulum membrane. It is found in the golgi apparatus. Its function is as follows. E1-like enzyme which specifically catalyzes the first step in ufmylation. Activates ufm1 by first adenylating its C-terminal glycine residue with ATP, and thereafter linking this residue to the side chain of a cysteine residue in E1, yielding a ufm1-E1 thioester and free AMP. Activates ufm1 via a trans-binding mechanism, in which ufm1 interacts with distinct sites in both subunits of the uba5 homodimer. Trans-binding also promotes stabilization of the uba5 homodimer, and enhances ATP-binding. Transfer of ufm1 from uba5 to the E2-like enzyme UFC1 also takes place using a trans mechanism. Ufmylation plays a key role in various processes, such as ribosome recycling, response to DNA damage, interferon response or reticulophagy (also called ER-phagy). The protein is Ubiquitin-like modifier-activating enzyme 5 of Xenopus laevis (African clawed frog).